A 761-amino-acid chain; its full sequence is Subtilisin-like protease SBT3 (761 aa).

Positions 1–22 are cleaved as a signal peptide; it reads MELLHLLLFSWALSAHLFLALA. Positions 23–112 are excised as a propeptide; it reads QRSTYIVHLD…AYKDRTVEPH (90 aa). The Inhibitor I9 domain maps to 26 to 110; sequence TYIVHLDKSL…ISAYKDRTVE (85 aa). The 491-residue stretch at 116–606 folds into the Peptidase S8 domain; it reads TSDFLKLNPS…AGHVDPNRAL (491 aa). Catalysis depends on Asp-144, which acts as the Charge relay system. Cysteines 170 and 181 form a disulfide. Asn-177 and Asn-203 each carry an N-linked (GlcNAc...) (complex) asparagine; alternate glycan. N-linked (GlcNAc...) (paucimannose) asparagine; alternate glycans are attached at residues Asn-177 and Asn-203. His-215 serves as the catalytic Charge relay system. N-linked (GlcNAc...) (paucimannose) asparagine; partial glycosylation occurs at Asn-376. A disulfide bond links Cys-382 and Cys-401. The active-site Charge relay system is the Ser-538. The interval 574–598 is disordered; that stretch reads LDNTRKPIKDSDNNKAATPLDMGAG. Residues 575–586 show a composition bias toward basic and acidic residues; sequence DNTRKPIKDSDN. A disulfide bridge links Cys-624 with Cys-645. N-linked (GlcNAc...) (complex) asparagine; alternate glycans are attached at residues Asn-697 and Asn-745. Asn-697 and Asn-745 each carry an N-linked (GlcNAc...) (paucimannose) asparagine; alternate glycan. The segment at 756–761 is necessary for prodomain cleavage and secretion; the sequence is PIIEVW.

It belongs to the peptidase S8 family. As to quaternary structure, homodimer. Post-translationally, propeptide is internally cleaved at Asn-38 and Asp-52 in a pH-dependent manner leading to the dissociation of the propeptide from the catalytic domain and resulting in the release of the active subtilase. Cleavage occurs at pH 5.7 and to a stronger extent at pH 5.2. Expressed in flowers, cotyledons and leaves with the highest expression in roots.

It localises to the secreted. Its activity is regulated as follows. Inhibited by 1 mM 4-(2-aminoethyl)-benzenesulfonyl fluoride (AEBSF), a general inhibitor of serine proteinases, but not by the more selective serine protease inhibitors N-alpha-tosyl-L-lysinyl-chloromethylketone (TLCK), N-tosyl-L-phenylalaninyl-chloromethylketone (TPCK), leupeptin, aprotinin or benzamidine. Its proteolytic activity is autoinhibited by the non-covalent binding of the propeptide to the catalytic domain. No effect on activity by the addition of CaCl(2) or calcium chelators. Serine protease. Has preference for Gln in the P1 position and Lys in the P2 position of oligopeptide substrates. Active also with His in the P1 position. Involved in resistance against insects partly by regulating expression of systemic wound response genes and possibly by its post-ingestive activity in the insect gut. Apart from the role in defense, may be involved in regulation of pectin methylesterases (PMEs) activity and pectin methylesterification of the cell wall. In Solanum lycopersicum (Tomato), this protein is Subtilisin-like protease SBT3.